The following is a 185-amino-acid chain: Ribosome-recycling factor (185 aa).

Residues 136–159 (NEQLKSQQKDGKMSEDELKRSQDE) form a disordered region.

The protein belongs to the RRF family.

It localises to the cytoplasm. Its function is as follows. Responsible for the release of ribosomes from messenger RNA at the termination of protein biosynthesis. May increase the efficiency of translation by recycling ribosomes from one round of translation to another. The sequence is that of Ribosome-recycling factor from Pelotomaculum thermopropionicum (strain DSM 13744 / JCM 10971 / SI).